The primary structure comprises 642 residues: Threonine--tRNA ligase (642 aa).

The 61-residue stretch at 1 to 61 folds into the TGS domain; sequence MPVITLPDGS…ETDAELSIIT (61 aa). The catalytic stretch occupies residues 243–534; that stretch reads DHRKIGKQLD…LIEEYAGRFP (292 aa). Residues Cys-334, His-385, and His-511 each contribute to the Zn(2+) site.

Belongs to the class-II aminoacyl-tRNA synthetase family. Homodimer. The cofactor is Zn(2+).

It is found in the cytoplasm. The enzyme catalyses tRNA(Thr) + L-threonine + ATP = L-threonyl-tRNA(Thr) + AMP + diphosphate + H(+). Catalyzes the attachment of threonine to tRNA(Thr) in a two-step reaction: L-threonine is first activated by ATP to form Thr-AMP and then transferred to the acceptor end of tRNA(Thr). Also edits incorrectly charged L-seryl-tRNA(Thr). The polypeptide is Threonine--tRNA ligase (Shewanella sp. (strain MR-7)).